Reading from the N-terminus, the 1774-residue chain is Kinesin-like protein KIF20B (1774 aa).

Positions 58-477 (YLQVCLRIRP…LKFSTTAQRV (420 aa)) constitute a Kinesin motor domain. An ATP-binding site is contributed by 152–159 (GLTNSGKT). Position 486 is a phosphoserine (serine 486). Coiled coils occupy residues 525–601 (EDVL…KIRE) and 705–747 (QEAI…LVQA). Residues 538-555 (EENEETQNMETELTDEDS) are compositionally biased toward acidic residues. Disordered stretches follow at residues 538–557 (EENE…DSDK) and 740–799 (ESNS…PPAK). The segment covering 741 to 778 (SNSLVQALKTSSKVDTSLTSNKSTCNETSEMPKNSRAQ) has biased composition (polar residues). Positions 779–788 (THSERKRLNE) are enriched in basic and acidic residues. Positions 824 to 946 (SEVVEGNRVL…QMQTKIDELR (123 aa)) form a coiled coil. Position 950 is a phosphoserine (serine 950). Positions 1002 to 1059 (ENSFHASIEAIWEECKEIVKASSKKSHQIQGLEEQIEKLQVEVKGYREENSDLRAQES) are necessary and sufficient for interaction with SHTN1. A coiled-coil region spans residues 1021–1507 (KASSKKSHQI…DEEIQELRKA (487 aa)). Residues serine 1107 and serine 1542 each carry the phosphoserine modification. Positions 1514–1774 (TENQTMNPKP…KRRLRTRTAK (261 aa)) are interaction with PIN1. The residue at position 1598 (threonine 1598) is a Phosphothreonine; by CDK1. A Phosphoserine modification is found at serine 1612. Residues 1625-1663 (KKNSTPRSNVKFPVSEHRNSPVKKEQKVSVGPSSKKTYS) form a disordered region. Over residues 1638–1651 (VSEHRNSPVKKEQK) the composition is skewed to basic and acidic residues. Residues serine 1669 and serine 1694 each carry the phosphoserine modification.

The protein belongs to the TRAFAC class myosin-kinesin ATPase superfamily. Kinesin family. In terms of assembly, oligomerizes (via kinesin motor domain). Associates with microtubules. Interacts (via C-terminal globular tail region) with PIN1 (via WW domain). Interacts with PRC1. Interacts with SHTN1 (via N-terminus); the interaction is direct and promotes the association of SHTN1 to microtubules in primary neurons. Associates with microtubules. Post-translationally, phosphorylated during mitosis by CDK1. In terms of tissue distribution, expressed in the brain (at protein level).

Its subcellular location is the nucleus. The protein localises to the cytoplasm. It is found in the cytoskeleton. The protein resides in the microtubule organizing center. It localises to the centrosome. Its subcellular location is the nucleolus. The protein localises to the nucleoplasm. It is found in the spindle. The protein resides in the spindle pole. It localises to the midbody. Its subcellular location is the cell projection. The protein localises to the axon. It is found in the growth cone. Its function is as follows. Plus-end-directed motor enzyme that is required for completion of cytokinesis. Required for proper midbody organization and abscission in polarized cortical stem cells. Plays a role in the regulation of neuronal polarization by mediating the transport of specific cargos. Participates in the mobilization of SHTN1 and in the accumulation of PIP3 in the growth cone of primary hippocampal neurons in a tubulin and actin-dependent manner. In the developing telencephalon, cooperates with SHTN1 to promote both the transition from the multipolar to the bipolar stage and the radial migration of cortical neurons from the ventricular zone toward the superficial layer of the neocortex. Involved in cerebral cortex growth. Acts as an oncogene for promoting bladder cancer cells proliferation, apoptosis inhibition and carcinogenic progression. The polypeptide is Kinesin-like protein KIF20B (Mus musculus (Mouse)).